The sequence spans 558 residues: Potassium-transporting ATPase potassium-binding subunit (558 aa).

The next 12 membrane-spanning stretches (helical) occupy residues 2–22 (LQGFVQIALILAILVATAPLL), 66–86 (VSAALISNLVMGVFVFLILMF), 135–155 (ALGFLMFTSAATGIAVAIAFI), 177–197 (ILLPISLVGAILLLVAGVPET), 253–273 (LLETVIMMVIPAGLIITYGIM), 280–300 (GWLIFWMVFILYGILIAIAAV), 327–347 (FGWVLTALWAVSTTGTMCGAV), 354–374 (LMPPGGFVTLSDLFLQIIWGG), 378–398 (GTAYLFVFLILTVFLTGLMVG), 413–433 (IVLASLILLIHPIAILIPTAI), 482–502 (LSASFSLIAGRYVPIVALIFL), and 528–548 (GITAGAIIILGALTFLPILVL).

The protein belongs to the KdpA family. As to quaternary structure, the system is composed of three essential subunits: KdpA, KdpB and KdpC.

It is found in the cell inner membrane. Its function is as follows. Part of the high-affinity ATP-driven potassium transport (or Kdp) system, which catalyzes the hydrolysis of ATP coupled with the electrogenic transport of potassium into the cytoplasm. This subunit binds the periplasmic potassium ions and delivers the ions to the membrane domain of KdpB through an intramembrane tunnel. This is Potassium-transporting ATPase potassium-binding subunit from Synechocystis sp. (strain ATCC 27184 / PCC 6803 / Kazusa).